The chain runs to 341 residues: MAAARGAMPTAPSYWRSRGPRALLLYPLSLLFGLLAALRRRLYRAGLLSQVRLPVKVIVVGNIAVGGSGKTPVVAWLVEQLRAAGWHPGIISRGHGGSARGVLEVVASGDAGVCGDEPLLLARLTGVPVFVGRDRPAAAAALLQAHPECDVIVSDDGMQHYRLARDLELAVVDPATLGNRWLLPAGPLREPVGRLDRVDLVIRHGDEGELPPRLGARAVPMRLVGDGFRGVADPARRCEASAFRGRRVHAVAGIGRPQRFFDQLAAMGLDVVPHPFPDHHRFVAADLDFAPGEPKLMTSKDAVKCAPFAPADAWEFPVTAEIGSGAAERILERLQHGRPPA.

64–71 serves as a coordination point for ATP; the sequence is AVGGSGKT.

The protein belongs to the LpxK family.

The catalysed reaction is a lipid A disaccharide + ATP = a lipid IVA + ADP + H(+). The protein operates within glycolipid biosynthesis; lipid IV(A) biosynthesis; lipid IV(A) from (3R)-3-hydroxytetradecanoyl-[acyl-carrier-protein] and UDP-N-acetyl-alpha-D-glucosamine: step 6/6. Transfers the gamma-phosphate of ATP to the 4'-position of a tetraacyldisaccharide 1-phosphate intermediate (termed DS-1-P) to form tetraacyldisaccharide 1,4'-bis-phosphate (lipid IVA). The sequence is that of Tetraacyldisaccharide 4'-kinase from Azoarcus sp. (strain BH72).